A 701-amino-acid polypeptide reads, in one-letter code: Elongation factor G (701 aa).

Positions 11 to 287 (TKVRNIGIMA…AVIDYLPSPL (277 aa)) constitute a tr-type G domain. GTP-binding positions include 20-27 (AHIDAGKT), 84-88 (DTPGH), and 138-141 (NKMD).

This sequence belongs to the TRAFAC class translation factor GTPase superfamily. Classic translation factor GTPase family. EF-G/EF-2 subfamily.

The protein localises to the cytoplasm. Catalyzes the GTP-dependent ribosomal translocation step during translation elongation. During this step, the ribosome changes from the pre-translocational (PRE) to the post-translocational (POST) state as the newly formed A-site-bound peptidyl-tRNA and P-site-bound deacylated tRNA move to the P and E sites, respectively. Catalyzes the coordinated movement of the two tRNA molecules, the mRNA and conformational changes in the ribosome. The sequence is that of Elongation factor G from Mycobacterium marinum (strain ATCC BAA-535 / M).